The sequence spans 268 residues: Membrane lipoprotein TpN32 (268 aa).

The first 23 residues, 1-23 (MKGKTVSAALVGKLIALSVGVVA), serve as a signal peptide directing secretion. Cys-24 is lipidated: N-palmitoyl cysteine. Cys-24 carries S-diacylglycerol cysteine lipidation.

It belongs to the NlpA lipoprotein family.

Its subcellular location is the cell membrane. This Treponema pallidum (strain Nichols) protein is Membrane lipoprotein TpN32 (tpn32).